A 493-amino-acid polypeptide reads, in one-letter code: Ketol-acid reductoisomerase (NADP(+)) (493 aa).

Residues 14 to 208 form the KARI N-terminal Rossmann domain; sequence LDQLGRCRFM…GGHRAGVLES (195 aa). NADP(+) contacts are provided by residues 45–48, Arg-68, Arg-76, Ser-78, and 108–110; these read CGAQ and DKQ. His-132 is an active-site residue. Gly-158 contacts NADP(+). 2 consecutive KARI C-terminal knotted domains span residues 209–345 and 346–486; these read SFVA…APKG and ENIK…MTDM. The Mg(2+) site is built by Asp-217, Glu-221, Glu-390, and Glu-394. Ser-415 contacts substrate.

It belongs to the ketol-acid reductoisomerase family. Mg(2+) is required as a cofactor.

It catalyses the reaction (2R)-2,3-dihydroxy-3-methylbutanoate + NADP(+) = (2S)-2-acetolactate + NADPH + H(+). The enzyme catalyses (2R,3R)-2,3-dihydroxy-3-methylpentanoate + NADP(+) = (S)-2-ethyl-2-hydroxy-3-oxobutanoate + NADPH + H(+). It participates in amino-acid biosynthesis; L-isoleucine biosynthesis; L-isoleucine from 2-oxobutanoate: step 2/4. It functions in the pathway amino-acid biosynthesis; L-valine biosynthesis; L-valine from pyruvate: step 2/4. Involved in the biosynthesis of branched-chain amino acids (BCAA). Catalyzes an alkyl-migration followed by a ketol-acid reduction of (S)-2-acetolactate (S2AL) to yield (R)-2,3-dihydroxy-isovalerate. In the isomerase reaction, S2AL is rearranged via a Mg-dependent methyl migration to produce 3-hydroxy-3-methyl-2-ketobutyrate (HMKB). In the reductase reaction, this 2-ketoacid undergoes a metal-dependent reduction by NADPH to yield (R)-2,3-dihydroxy-isovalerate. The polypeptide is Ketol-acid reductoisomerase (NADP(+)) (Histophilus somni (strain 129Pt) (Haemophilus somnus)).